Here is a 95-residue protein sequence, read N- to C-terminus: Protein Vpr (95 aa).

The segment at 1-42 (MEQAPEDQGPQREPYNEWALELLEDLKNEALRHFPRPWLHGL) is homooligomerization. A phosphoserine; by host mark is found at serine 79, serine 93, and serine 95.

Belongs to the HIV-1 VPR protein family. Homooligomer, may form homodimer. Interacts with p6-gag region of the Pr55 Gag precursor protein through a (Leu-X-X)4 motif near the C-terminus of the P6gag protein. Interacts with host UNG. May interact with host RAD23A/HHR23A. Interacts with host VPRBP/DCAF1, leading to hijack the CUL4A-RBX1-DDB1-DCAF1/VPRBP complex, mediating ubiquitination of host proteins such as TERT and ZGPAT and arrest of the cell cycle in G2 phase. Phosphorylated on several residues by host. These phosphorylations regulate VPR activity for the nuclear import of the HIV-1 pre-integration complex.

It localises to the virion. The protein localises to the host nucleus. The protein resides in the host extracellular space. Its function is as follows. During virus replication, may deplete host UNG protein, and incude G2-M cell cycle arrest. Acts by targeting specific host proteins for degradation by the 26S proteasome, through association with the cellular CUL4A-DDB1 E3 ligase complex by direct interaction with host VPRPB/DCAF-1. Cell cycle arrest reportedly occurs within hours of infection and is not blocked by antiviral agents, suggesting that it is initiated by the VPR carried into the virion. Additionally, VPR induces apoptosis in a cell cycle dependent manner suggesting that these two effects are mechanistically linked. Detected in the serum and cerebrospinal fluid of AIDS patient, VPR may also induce cell death to bystander cells. In terms of biological role, during virus entry, plays a role in the transport of the viral pre-integration (PIC) complex to the host nucleus. This function is crucial for viral infection of non-dividing macrophages. May act directly at the nuclear pore complex, by binding nucleoporins phenylalanine-glycine (FG)-repeat regions. This chain is Protein Vpr, found in Pan troglodytes (Chimpanzee).